Here is a 363-residue protein sequence, read N- to C-terminus: Flagellar P-ring protein 2 (363 aa).

A signal peptide spans 1–20 (MKLRTCCISLMLLLALPLQA).

It belongs to the FlgI family. In terms of assembly, the basal body constitutes a major portion of the flagellar organelle and consists of four rings (L,P,S, and M) mounted on a central rod.

The protein localises to the periplasm. It localises to the bacterial flagellum basal body. Its function is as follows. Assembles around the rod to form the L-ring and probably protects the motor/basal body from shearing forces during rotation. The protein is Flagellar P-ring protein 2 of Photobacterium profundum (strain SS9).